The primary structure comprises 620 residues: Cilia- and flagella-associated protein 52 (620 aa).

WD repeat units lie at residues 62 to 106 (GHGN…LIAR), 109 to 150 (LHKG…AICG), 156 to 195 (LNVGNATSVVFSRCRDEMFVTAGNGTIRVWELDLPNRKIW), 288 to 327 (QLQGGITSITLRGEGHQFFVGTEESHIYRVNFTDFKETLI), 330 to 369 (CHFEAVQDIVFPFGTAELFATCAKKDIRVWHTMSKRELLR), 372 to 411 (VPNMTCHGIDFMRDGKSIISAWDDGKIRAFAPESGRLMYT), 415 to 454 (AHRIGVTAIATTSDCKRIISGGGEGEVRVWQVGCQTQKLE), 459 to 498 (EHKSSVSCIRVKKNNEECVTASTDGTCIIWDLVRLRRNQM), 500 to 541 (LANT…RELE), 543 to 582 (SLSGSINGMDITQEGGHFVTGGHDHLVKVWDYNEGEVTHV), and 585 to 620 (GHSGNIMAMRISPGNQYIVSVSADGAILRWKYPFAS).

Belongs to the CFAP52 family. In terms of assembly, microtubule inner protein component of sperm flagellar doublet microtubules. Interacts with BRCA2. Interacts with the CCT chaperonin complex. Interacts with HSP70. Interacts with AK8. Interacts with CFAP45. Interacts with DNAI1. Interacts with IQDC.

Its subcellular location is the cytoplasm. It is found in the cytoskeleton. The protein localises to the cilium axoneme. The protein resides in the flagellum axoneme. Microtubule inner protein (MIP) part of the dynein-decorated doublet microtubules (DMTs) in cilia axoneme. Important for proper ciliary and flagellar beating. May act in cooperation with CFAP45 and axonemal dynein subunit DNAH11. May play a role in cell growth and/or survival. This chain is Cilia- and flagella-associated protein 52, found in Mus musculus (Mouse).